The chain runs to 382 residues: Pyruvate dehydrogenase E1 component subunit beta, mitochondrial (382 aa).

A mitochondrion-targeting transit peptide spans 1–46 (MSRFLRPAFRLATTATRASTIRPTPSSLITKAAAVPTTRLLQKRSY). E112 contacts thiamine diphosphate. The K(+) site is built by I165, A213, I214, D216, and N218.

In terms of assembly, eukaryotic pyruvate dehydrogenase (PDH) complexes are organized as a core consisting of the oligomeric dihydrolipoamide acetyl-transferase (E2), around which are arranged multiple copies of pyruvate dehydrogenase (E1), dihydrolipoamide dehydrogenase (E3) and protein X (E3BP) bound by non-covalent bonds. The Chaetomium thermophilum PDH complex contains 60 E2 units, 12 E3BP units, about 20 E1 units, and 12 or more E3 units. The units are organized in 1 E2 60-mer, 4 E3BP trimers, about 20 E1 tetramers, and a maximum of 12 E3 dimers. Pyruvate dehydrogenase (E1) is active as a tetramer of 2 alpha and 2 beta subunits. The E3BP trimers are bound inside the icosahedral core with tetrahedral symmetry. It depends on thiamine diphosphate as a cofactor.

It localises to the mitochondrion. It catalyses the reaction N(6)-[(R)-lipoyl]-L-lysyl-[protein] + pyruvate + H(+) = N(6)-[(R)-S(8)-acetyldihydrolipoyl]-L-lysyl-[protein] + CO2. Its function is as follows. The 10-megadalton pyruvate dehydrogenase complex contains multiple copies of three enzymatic components: pyruvate dehydrogenase (E1), dihydrolipoamide acetyltransferase (E2) and lipoamide dehydrogenase (E3) and catalyzes the overall oxidative decarboxylation of pyruvate to form acetyl-CoA and CO(2). Within the complex, pyruvate and thiamine pyrophosphate (TPP or vitamin B1) are bound by pyruvate dehydrogenase E1 subunits alpha and beta and pyruvate is decarboxylated leading to the 2-carbon hydrohyethyl bound to TPP. The E2 component contains covalently-bound lipoyl cofactors and transfers the hydroxyethyl group from TPP to an oxidized form of covalently bound lipoamide, and the resulting acetyl group is then transferred to free coenzyme A to form acetyl-CoA and reduced dihydrolipoamide-E2. Finally, the flavoprotein dihydrolipoamide dehydrogenase (E3) re-oxidizes the lipoyl group of dihydrolipoamide-E2 to form lipoamide-E2 and NADH. A fourth subunit, E3BP, is responsible for tethering E3 in proximity to the core, forming the entire metabolon. This chain is Pyruvate dehydrogenase E1 component subunit beta, mitochondrial, found in Chaetomium thermophilum (strain DSM 1495 / CBS 144.50 / IMI 039719) (Thermochaetoides thermophila).